A 290-amino-acid polypeptide reads, in one-letter code: Cilia- and flagella-associated protein 298-A (290 aa).

Belongs to the CFAP298 family.

Its subcellular location is the cytoplasm. It localises to the cytoskeleton. The protein localises to the cilium basal body. In terms of biological role, plays a role in motile cilium function, possibly by acting on outer dynein arm assembly. Seems to be important for initiation rather than maintenance of cilium motility. Required for correct positioning of the cilium at the apical cell surface, suggesting an additional role in the planar cell polarity (PCP) pathway. May suppress canonical Wnt signaling activity. This chain is Cilia- and flagella-associated protein 298-A (cfap298-a), found in Xenopus laevis (African clawed frog).